The chain runs to 74 residues: MNATIFALLLLLNLAMYNAAEQSSETDMDDTLLIPENYRKGCFKEGHSCPKTAPCCRPLVCKGPSPNTKKCTRP.

A signal peptide spans 1–19 (MNATIFALLLLLNLAMYNA). Positions 20-39 (AEQSSETDMDDTLLIPENYR) are excised as a propeptide. 3 disulfides stabilise this stretch: cysteine 42/cysteine 56, cysteine 49/cysteine 61, and cysteine 55/cysteine 71.

This sequence belongs to the neurotoxin 36 family. 01 subfamily. As to expression, expressed by the venom gland.

It is found in the secreted. Its function is as follows. Probable ion channel inhibitor. This chain is U5-theraphotoxin-Cg1a, found in Chilobrachys guangxiensis (Chinese earth tiger tarantula).